Consider the following 588-residue polypeptide: Dual specificity tyrosine-phosphorylation-regulated kinase 3 (588 aa).

Residues 1-188 (MGGTARGPGR…HGVIGGPNNG (188 aa)) are disordered. The segment covering 97-134 (SNTIQSDGISDSEKCSPTVSQGKSSDCLNTVKSNSSSK) has biased composition (polar residues). Positions 209–522 (YEVLKIIGKG…PAQALRHPWI (314 aa)) constitute a Protein kinase domain. ATP is bound by residues 215 to 223 (IGKGSFGQV), Lys238, and 288 to 291 (FELL). Residue Asp335 is the Proton acceptor of the active site. Ser350 is subject to Phosphoserine. Tyr369 is modified (phosphotyrosine). The Nuclear localization signal motif lies at 468–481 (RSRRGKKRGPPGSK).

Belongs to the protein kinase superfamily. CMGC Ser/Thr protein kinase family. MNB/DYRK subfamily. In terms of assembly, interacts with SIRT1. Mg(2+) is required as a cofactor. In terms of processing, ubiquitinated at anaphase by the anaphase-promoting complex (APC/C), leading to its degradation by the proteasome. Post-translationally, protein kinase activity is activated following autophosphorylation at Tyr-369. Autophosphorylation at Ser-350 stabilizes the protein and enhances the protein kinase activity. As to expression, isoform 1: Highly expressed in testis and in hematopoietic tissue such as fetal liver, and bone marrow. Isoform 1: Predominant form in fetal liver and bone marrow. Isoform 1: Present at low levels in heart, pancreas, lymph node and thymus. Isoform 2: Highly expressed in testis and in hematopoietic tissue such as fetal liver, and bone marrow. Isoform 2: Predominant form in testis. Isoform 2: Present at low levels in heart, pancreas, lymph node and thymus.

It localises to the nucleus. The protein localises to the cytoplasm. Its subcellular location is the nucleus speckle. It is found in the cytoplasmic granule. The protein resides in the cytoskeleton. It localises to the microtubule organizing center. The protein localises to the centrosome. It carries out the reaction L-seryl-[protein] + ATP = O-phospho-L-seryl-[protein] + ADP + H(+). It catalyses the reaction L-threonyl-[protein] + ATP = O-phospho-L-threonyl-[protein] + ADP + H(+). The catalysed reaction is L-tyrosyl-[protein] + ATP = O-phospho-L-tyrosyl-[protein] + ADP + H(+). Its activity is regulated as follows. Protein kinase activity is activated following autophosphorylation at Tyr-369. Inhibited by harmine, an ATP competitive inhibitor. Inhibited by small-compound GSK-626616. Functionally, dual-specificity protein kinase that promotes disassembly of several types of membraneless organelles during mitosis, such as stress granules, nuclear speckles and pericentriolar material. Dual-specificity tyrosine-regulated kinases (DYRKs) autophosphorylate a critical tyrosine residue in their activation loop and phosphorylate their substrate on serine and threonine residues. Acts as a central dissolvase of membraneless organelles during the G2-to-M transition, after the nuclear-envelope breakdown: acts by mediating phosphorylation of multiple serine and threonine residues in unstructured domains of proteins, such as SRRM1 and PCM1. Does not mediate disassembly of all membraneless organelles: disassembly of P-body and nucleolus is not regulated by DYRK3. Dissolution of membraneless organelles at the onset of mitosis is also required to release mitotic regulators, such as ZNF207, from liquid-unmixed organelles where they are sequestered and keep them dissolved during mitosis. Regulates mTORC1 by mediating the dissolution of stress granules: during stressful conditions, DYRK3 partitions from the cytosol to the stress granule, together with mTORC1 components, which prevents mTORC1 signaling. When stress signals are gone, the kinase activity of DYRK3 is required for the dissolution of stress granule and mTORC1 relocation to the cytosol: acts by mediating the phosphorylation of the mTORC1 inhibitor AKT1S1, allowing full reactivation of mTORC1 signaling. Also acts as a negative regulator of EPO-dependent erythropoiesis: may place an upper limit on red cell production during stress erythropoiesis. Inhibits cell death due to cytokine withdrawal in hematopoietic progenitor cells. Promotes cell survival upon genotoxic stress through phosphorylation of SIRT1: this in turn inhibits p53/TP53 activity and apoptosis. In Homo sapiens (Human), this protein is Dual specificity tyrosine-phosphorylation-regulated kinase 3.